The chain runs to 196 residues: Peptidyl-tRNA hydrolase (196 aa).

Y18 is a tRNA binding site. Residue H23 is the Proton acceptor of the active site. 3 residues coordinate tRNA: F69, N71, and N117.

This sequence belongs to the PTH family. Monomer.

The protein localises to the cytoplasm. The catalysed reaction is an N-acyl-L-alpha-aminoacyl-tRNA + H2O = an N-acyl-L-amino acid + a tRNA + H(+). Its function is as follows. Hydrolyzes ribosome-free peptidyl-tRNAs (with 1 or more amino acids incorporated), which drop off the ribosome during protein synthesis, or as a result of ribosome stalling. In terms of biological role, catalyzes the release of premature peptidyl moieties from peptidyl-tRNA molecules trapped in stalled 50S ribosomal subunits, and thus maintains levels of free tRNAs and 50S ribosomes. This chain is Peptidyl-tRNA hydrolase, found in Aliivibrio fischeri (strain MJ11) (Vibrio fischeri).